A 328-amino-acid polypeptide reads, in one-letter code: CMP-N-acetylneuraminate-beta-galactosamide-alpha-2,3-sialyltransferase 4 (328 aa).

At 1 to 7 (MCPAGWK) the chain is on the cytoplasmic side. The helical; Signal-anchor for type II membrane protein transmembrane segment at 8–25 (LLAMLALVLVVMVWYSIS) threads the bilayer. The Lumenal segment spans residues 26–328 (REDSFYFPIP…MGAVKNLTSF (303 aa)). Asn56, Asn126, Asn305, and Asn324 each carry an N-linked (GlcNAc...) asparagine glycan. A disulfide bridge connects residues Cys115 and Cys268.

It belongs to the glycosyltransferase 29 family. In terms of processing, the soluble form derives from the membrane form by proteolytic processing.

It localises to the golgi apparatus. Its subcellular location is the golgi stack membrane. It is found in the secreted. The catalysed reaction is a beta-D-galactosyl-(1-&gt;3)-N-acetyl-beta-D-galactosaminyl derivative + CMP-N-acetyl-beta-neuraminate = an N-acetyl-alpha-neuraminyl-(2-&gt;3)-beta-D-galactosyl-(1-&gt;3)-N-acetyl-beta-D-galactosaminyl derivative + CMP + H(+). It carries out the reaction a beta-D-galactosyl-(1-&gt;3)-N-acetyl-alpha-D-galactosaminyl derivative + CMP-N-acetyl-beta-neuraminate = an N-acetyl-alpha-neuraminyl-(2-&gt;3)-beta-D-galactosyl-(1-&gt;3)-N-acetyl-alpha-D-galactosaminyl derivative + CMP + H(+). It catalyses the reaction a beta-D-galactosyl-(1-&gt;4)-N-acetyl-beta-D-glucosaminyl derivative + CMP-N-acetyl-beta-neuraminate = an N-acetyl-alpha-neuraminyl-(2-&gt;3)-beta-D-galactosyl-(1-&gt;4)-N-acetyl-beta-D-glucosaminyl derivative + CMP + H(+). The enzyme catalyses a ganglioside GM1 (d18:1(4E)) + CMP-N-acetyl-beta-neuraminate = a ganglioside GD1a (d18:1(4E)) + CMP + H(+). The catalysed reaction is a ganglioside GA1 (d18:1(4E)) + CMP-N-acetyl-beta-neuraminate = a ganglioside GM1b (d18:1(4E)) + CMP + H(+). It carries out the reaction a ganglioside GT1c (d18:1(4E)) + CMP-N-acetyl-beta-neuraminate = a ganglioside GQ1c (d18:1(4E)) + CMP + H(+). It catalyses the reaction a neolactoside nLc4Cer + CMP-N-acetyl-beta-neuraminate = a neolactoside IV(3)-alpha-NeuAc-nLc4Cer + CMP + H(+). The enzyme catalyses a neolactoside nLc4Cer(d18:1(4E)) + CMP-N-acetyl-beta-neuraminate = a neolactoside IV(3)-alpha-NeuAc-nLc4Cer(d18:1(4E)) + CMP + H(+). It functions in the pathway protein modification; protein glycosylation. Its pathway is glycolipid biosynthesis. A beta-galactoside alpha2-3 sialyltransferase involved in terminal sialylation of glycoproteins and glycolipids. Catalyzes the transfer of sialic acid (N-acetyl-neuraminic acid; Neu5Ac) from the nucleotide sugar donor CMP-Neu5Ac onto acceptor Galbeta-(1-&gt;3)-GalNAc- and Galbeta-(1-&gt;4)-GlcNAc-terminated glycoconjugates through an alpha2-3 linkage. Plays a major role in hemostasis. Responsible for sialylation of plasma VWF/von Willebrand factor, preventing its recognition by asialoglycoprotein receptors (ASGPR) and subsequent clearance. Regulates ASGPR-mediated clearance of platelets. Participates in the biosynthesis of the sialyl Lewis X epitopes, both on O- and N-glycans, which are recognized by SELE/E-selectin, SELP/P-selectin and SELL/L-selectin. Essential for selectin-mediated rolling and adhesion of leukocytes during extravasation. Contributes to adhesion and transendothelial migration of neutrophils likely through terminal sialylation of CXCR2. In glycosphingolipid biosynthesis, sialylates GM1 and GA1 gangliosides to form GD1a and GM1b, respectively. Metabolizes brain c-series ganglioside GT1c forming GQ1c. Synthesizes ganglioside LM1 (IV3Neu5Ac-nLc4Cer), a major structural component of peripheral nerve myelin. The polypeptide is CMP-N-acetylneuraminate-beta-galactosamide-alpha-2,3-sialyltransferase 4 (ST3GAL4) (Pan troglodytes (Chimpanzee)).